The primary structure comprises 434 residues: Glucose-6-phosphate 1-dehydrogenase (434 aa).

NADP(+) contacts are provided by residues 7 to 14 (GSSGDLAK), Arg-36, Tyr-93, and Lys-112. D-glucose 6-phosphate-binding positions include Lys-112, 137–141 (HYLLK), Glu-175, and Asp-193. The Proton acceptor role is filled by His-198. Residues Lys-280 and Lys-285 each coordinate D-glucose 6-phosphate. Arg-286 lines the NADP(+) pocket.

This sequence belongs to the glucose-6-phosphate dehydrogenase family.

It carries out the reaction D-glucose 6-phosphate + NADP(+) = 6-phospho-D-glucono-1,5-lactone + NADPH + H(+). It functions in the pathway carbohydrate degradation; pentose phosphate pathway; D-ribulose 5-phosphate from D-glucose 6-phosphate (oxidative stage): step 1/3. Catalyzes the rate-limiting step of the oxidative pentose-phosphate pathway, which represents a route for the dissimilation of carbohydrates besides glycolysis. The main function of this enzyme is to provide reducing power (NADPH) and pentose phosphates for fatty acid and nucleic acid synthesis. This is Glucose-6-phosphate 1-dehydrogenase (ZWF1) from Encephalitozoon cuniculi (strain GB-M1) (Microsporidian parasite).